Consider the following 445-residue polypeptide: Rab GDP dissociation inhibitor beta (445 aa).

Residue Met1 is modified to N-acetylmethionine. At Lys57 the chain carries N6-succinyllysine. Ser61 carries the post-translational modification Phosphoserine. At Lys112 the chain carries N6-acetyllysine. The residue at position 130 (Ser130) is a Phosphoserine. An N6-acetyllysine modification is found at Lys269. Ser382 is modified (phosphoserine).

The protein belongs to the Rab GDI family. As to quaternary structure, interacts with RHOH. Interacts with the GDP-bound inactive forms of RAB3A, RAB3B, RAB3C, RAB5A, RAB5B, RAB5C, RAB8A, RAB8B, RAB10, RAB12, RAB35, and RAB43; binds RAB3D to a lesser extent. Interacts with DZIP1; this interaction negatively regulates the interaction of GDI2 with GDP-bound RAB8A. In terms of tissue distribution, ubiquitous.

It is found in the cytoplasm. The protein localises to the membrane. Its subcellular location is the golgi apparatus. It localises to the trans-Golgi network. GDP-dissociation inhibitor preventing the GDP to GTP exchange of most Rab proteins. By keeping these small GTPases in their inactive GDP-bound form regulates intracellular membrane trafficking. Negatively regulates protein transport to the cilium and ciliogenesis through the inhibition of RAB8A. The polypeptide is Rab GDP dissociation inhibitor beta (GDI2) (Homo sapiens (Human)).